The sequence spans 150 residues: Geranyl diphosphate phosphohydrolase (150 aa).

Residues 14–147 (SIKVAVVVCL…DNVVQDGFNP (134 aa)) form the Nudix hydrolase domain. The short motif at 48–69 (GHLEFGESFEECAARELKEETD) is the Nudix box element. Residues E63 and E67 each coordinate Mg(2+).

This sequence belongs to the Nudix hydrolase family. As to expression, expressed in petals. Little or no expression in stamens, sepals or young leaves.

The protein localises to the cytoplasm. It carries out the reaction (2E)-geranyl diphosphate + H2O = (2E)-geranyl phosphate + phosphate + H(+). Involved in a cytosolic pathway for the biosynthesis of free monoterpene alcohols that contribute to fragrance. Lacks terpene synthase activity, but has a diphosphohydrolase activity with geranyl diphosphate and farnesyl diphosphate as substrates. No activity with 8-oxo-dGTP and dGTP and unable to dephosphorylate geranyl phosphate to geraniol. The polypeptide is Geranyl diphosphate phosphohydrolase (Rosa hybrid cultivar).